Reading from the N-terminus, the 68-residue chain is Protein SlyX homolog (68 aa).

This sequence belongs to the SlyX family.

In Ectopseudomonas mendocina (strain ymp) (Pseudomonas mendocina), this protein is Protein SlyX homolog.